The chain runs to 1529 residues: ABC multidrug transporter AFR2 (1529 aa).

A compositionally biased stretch (gly residues) spans methionine 1–leucine 10. Residues methionine 1–glycine 21 form a disordered region. One can recognise an ABC transporter 1 domain in the interval glycine 144–serine 394. N-linked (GlcNAc...) asparagine glycosylation is found at asparagine 235 and asparagine 318. The next 5 helical transmembrane spans lie at leucine 505–tyrosine 525, alanine 539–leucine 559, isoleucine 589–leucine 609, glycine 614–phenylalanine 634, and leucine 648–valine 668. Asparagine 742 carries an N-linked (GlcNAc...) asparagine glycan. Residues glycine 757–isoleucine 777 traverse the membrane as a helical segment. In terms of domain architecture, ABC transporter 2 spans phenylalanine 845 to glycine 1087. Glycine 881 to threonine 888 contributes to the ATP binding site. 5 consecutive transmembrane segments (helical) span residues tyrosine 1193–phenylalanine 1213, phenylalanine 1227–phenylalanine 1247, isoleucine 1268–isoleucine 1288, leucine 1314–valine 1334, and methionine 1353–phenylalanine 1373. The N-linked (GlcNAc...) asparagine glycan is linked to asparagine 1434. Residues phenylalanine 1465–leucine 1485 traverse the membrane as a helical segment. The interval glycine 1493–alanine 1529 is disordered.

This sequence belongs to the ABC transporter superfamily. ABCG family. PDR (TC 3.A.1.205) subfamily.

Its subcellular location is the cell membrane. It carries out the reaction itraconazole(in) + ATP + H2O = itraconazole(out) + ADP + phosphate + H(+). It catalyses the reaction voriconazole(in) + ATP + H2O = voriconazole(out) + ADP + phosphate + H(+). The catalysed reaction is fluconazole(in) + ATP + H2O = fluconazole(out) + ADP + phosphate + H(+). In terms of biological role, pleiotropic ABC efflux transporter that confers resistance to structurally and functionally unrelated compounds including azoles such as fluconazole (FLC), itraconazole (ITC), posaconazole (POS), and voriconazole (VRC). The protein is ABC multidrug transporter AFR2 of Cryptococcus neoformans var. grubii serotype A (strain H99 / ATCC 208821 / CBS 10515 / FGSC 9487) (Filobasidiella neoformans var. grubii).